Consider the following 60-residue polypeptide: Small ribosomal subunit protein eS31 (60 aa).

Zn(2+) contacts are provided by cysteine 32, cysteine 35, cysteine 50, and cysteine 53. Residues 32–53 (CPRCGAGVFMGEHKDRFSCGKC) form a C4-type zinc finger.

This sequence belongs to the eukaryotic ribosomal protein eS31 family. As to quaternary structure, part of the 30S ribosomal subunit. It depends on Zn(2+) as a cofactor.

This is Small ribosomal subunit protein eS31 from Methanocorpusculum labreanum (strain ATCC 43576 / DSM 4855 / Z).